A 1317-amino-acid polypeptide reads, in one-letter code: DNA-directed RNA polymerase subunit beta' (1317 aa).

Zn(2+) is bound by residues C60, C62, C75, and C78. 3 residues coordinate Mg(2+): D535, D537, and D539. Residues C890, C967, C974, and C977 each contribute to the Zn(2+) site.

This sequence belongs to the RNA polymerase beta' chain family. The RNAP catalytic core consists of 2 alpha, 1 beta, 1 beta' and 1 omega subunit. When a sigma factor is associated with the core the holoenzyme is formed, which can initiate transcription. It depends on Mg(2+) as a cofactor. Zn(2+) serves as cofactor.

The enzyme catalyses RNA(n) + a ribonucleoside 5'-triphosphate = RNA(n+1) + diphosphate. DNA-dependent RNA polymerase catalyzes the transcription of DNA into RNA using the four ribonucleoside triphosphates as substrates. The chain is DNA-directed RNA polymerase subunit beta' from Mycolicibacterium smegmatis (strain ATCC 700084 / mc(2)155) (Mycobacterium smegmatis).